The following is a 68-amino-acid chain: Metallothionein-3 (68 aa).

Met-1 carries the post-translational modification N-acetylmethionine. Positions 1-30 (MDPETCPCPSGGSCTCADSCKCEGCKCTSC) are beta. The a divalent metal cation site is built by Cys-6, Cys-8, Cys-14, Cys-16, Cys-20, Cys-22, Cys-25, Cys-27, and Cys-30. Positions 31–68 (KKSCCSCCPAECEKCAKDCVCKGGEAAEAEAEKCSCCQ) are alpha. Phosphoserine is present on Ser-33. Positions 34, 35, 37, 38, 42, 45, 49, 51, 64, 66, and 67 each coordinate a divalent metal cation.

This sequence belongs to the metallothionein superfamily. Type 1 family. In terms of tissue distribution, abundant in a subset of astrocytes in the normal human brain, but greatly reduced in the Alzheimer disease (AD) brain.

In terms of biological role, binds heavy metals. Contains three zinc and three copper atoms per polypeptide chain and only a negligible amount of cadmium. Inhibits survival and neurite formation of cortical neurons in vitro. The protein is Metallothionein-3 (MT3) of Homo sapiens (Human).